The following is a 47-amino-acid chain: Large ribosomal subunit protein bL36A (47 aa).

This sequence belongs to the bacterial ribosomal protein bL36 family.

This chain is Large ribosomal subunit protein bL36A, found in Yersinia enterocolitica serotype O:8 / biotype 1B (strain NCTC 13174 / 8081).